We begin with the raw amino-acid sequence, 876 residues long: Alanine--tRNA ligase (876 aa).

An N6-acetyllysine modification is found at K74. Zn(2+) contacts are provided by H564, H568, C666, and H670.

The protein belongs to the class-II aminoacyl-tRNA synthetase family. In terms of assembly, homotetramer. It depends on Zn(2+) as a cofactor.

The protein resides in the cytoplasm. It carries out the reaction tRNA(Ala) + L-alanine + ATP = L-alanyl-tRNA(Ala) + AMP + diphosphate. Catalyzes the attachment of alanine to tRNA(Ala) in a two-step reaction: alanine is first activated by ATP to form Ala-AMP and then transferred to the acceptor end of tRNA(Ala). Also edits incorrectly charged Ser-tRNA(Ala) and Gly-tRNA(Ala) via its editing domain. The chain is Alanine--tRNA ligase from Escherichia coli (strain SMS-3-5 / SECEC).